Reading from the N-terminus, the 779-residue chain is Translation initiation factor IF-2 (779 aa).

Residues 44–193 (RQLDNAVDGT…TPPKPKELPE (150 aa)) are disordered. The segment covering 53 to 65 (TNKKAEAPKKETT) has biased composition (basic and acidic residues). Polar residues predominate over residues 66–81 (SNENGNSKGPNKPNMT). Low complexity-rich tracts occupy residues 82–93 (NSNEKSNKPNKP) and 117–167 (ANTS…NNKG). One can recognise a tr-type G domain in the interval 280–449 (ERPPVVTIMG…LLVSEVEELK (170 aa)). The interval 289–296 (GHVDHGKT) is G1. Residue 289–296 (GHVDHGKT) participates in GTP binding. Positions 314–318 (GITQH) are G2. The tract at residues 335–338 (DTPG) is G3. GTP contacts are provided by residues 335–339 (DTPGH) and 389–392 (NKID). The interval 389-392 (NKID) is G4. The G5 stretch occupies residues 425-427 (SAK).

This sequence belongs to the TRAFAC class translation factor GTPase superfamily. Classic translation factor GTPase family. IF-2 subfamily.

The protein localises to the cytoplasm. Functionally, one of the essential components for the initiation of protein synthesis. Protects formylmethionyl-tRNA from spontaneous hydrolysis and promotes its binding to the 30S ribosomal subunits. Also involved in the hydrolysis of GTP during the formation of the 70S ribosomal complex. This is Translation initiation factor IF-2 from Listeria monocytogenes serovar 1/2a (strain ATCC BAA-679 / EGD-e).